We begin with the raw amino-acid sequence, 534 residues long: CTP synthase (534 aa).

Positions 1-267 are amidoligase domain; sequence MTKYIFVTGG…DQIVCDHLKL (267 aa). Ser13 is a binding site for CTP. Ser13 serves as a coordination point for UTP. ATP is bound at residue 14-19; that stretch reads SIGKGI. L-glutamine is bound at residue Tyr54. Asp71 lines the ATP pocket. Residues Asp71 and Glu141 each contribute to the Mg(2+) site. CTP-binding positions include 148-150, 188-193, and Lys224; these read DIE and KTKPTQ. UTP is bound by residues 188–193 and Lys224; that span reads KTKPTQ. 240-242 contributes to the ATP binding site; it reads RNV. One can recognise a Glutamine amidotransferase type-1 domain in the interval 292–534; that stretch reads KIALVGKYVE…FVTAAIKNSN (243 aa). Gly354 provides a ligand contact to L-glutamine. Cys381 functions as the Nucleophile; for glutamine hydrolysis in the catalytic mechanism. Residues 382–385, Glu405, and Arg463 contribute to the L-glutamine site; that span reads LGMQ. Active-site residues include His508 and Glu510.

The protein belongs to the CTP synthase family. As to quaternary structure, homotetramer.

It carries out the reaction UTP + L-glutamine + ATP + H2O = CTP + L-glutamate + ADP + phosphate + 2 H(+). It catalyses the reaction L-glutamine + H2O = L-glutamate + NH4(+). The enzyme catalyses UTP + NH4(+) + ATP = CTP + ADP + phosphate + 2 H(+). Its pathway is pyrimidine metabolism; CTP biosynthesis via de novo pathway; CTP from UDP: step 2/2. Allosterically activated by GTP, when glutamine is the substrate; GTP has no effect on the reaction when ammonia is the substrate. The allosteric effector GTP functions by stabilizing the protein conformation that binds the tetrahedral intermediate(s) formed during glutamine hydrolysis. Inhibited by the product CTP, via allosteric rather than competitive inhibition. Catalyzes the ATP-dependent amination of UTP to CTP with either L-glutamine or ammonia as the source of nitrogen. Regulates intracellular CTP levels through interactions with the four ribonucleotide triphosphates. The protein is CTP synthase of Streptococcus pyogenes serotype M28 (strain MGAS6180).